A 78-amino-acid chain; its full sequence is MKLIIFTGLALLLIVSLIDVEAQNEGACLPRGSVCTTNHAGCCSKLGCDCYRRFEKGVEKGQKCWCIPTGLRYSKEKE.

A signal peptide spans 1-22 (MKLIIFTGLALLLIVSLIDVEA). Residues 23–26 (QNEG) constitute a propeptide that is removed on maturation.

Belongs to the neurotoxin 19 (CSTX) family. 07 (U7-Lctx) subfamily. In terms of processing, contains 4 disulfide bonds. As to expression, expressed by the venom gland.

Its subcellular location is the secreted. This Lycosa singoriensis (Wolf spider) protein is U7-lycotoxin-Ls1d.